The primary structure comprises 117 residues: Probable prefoldin subunit 1 (117 aa).

The protein belongs to the prefoldin subunit beta family. In terms of assembly, heterohexamer of two PFD-alpha type and four PFD-beta type subunits.

Its subcellular location is the cytoplasm. Its function is as follows. Binds specifically to cytosolic chaperonin (c-CPN) and transfers target proteins to it. Binds to nascent polypeptide chain and promotes folding in an environment in which there are many competing pathways for nonnative proteins. Has a role in gonadogenesis. This chain is Probable prefoldin subunit 1 (pfd-1), found in Caenorhabditis briggsae.